We begin with the raw amino-acid sequence, 488 residues long: GTPase Der (488 aa).

EngA-type G domains lie at 3 to 166 (PVVA…AEAM) and 199 to 372 (IKLA…DSAT). Residues 9–16 (GRPNVGKS), 56–60 (DTGGI), 118–121 (NKID), 205–212 (GKPNVGKS), 252–256 (DTAGV), and 317–320 (NKWD) each bind GTP. Residues 373–457 (RRVSTSMLTR…PIQLRFQEGD (85 aa)) enclose the KH-like domain.

Belongs to the TRAFAC class TrmE-Era-EngA-EngB-Septin-like GTPase superfamily. EngA (Der) GTPase family. As to quaternary structure, associates with the 50S ribosomal subunit.

Functionally, GTPase that plays an essential role in the late steps of ribosome biogenesis. This is GTPase Der from Shewanella sp. (strain MR-7).